Consider the following 209-residue polypeptide: uncharacterized protein (209 aa).

Positions 1–17 (MKRLVTGLLALSLFLAA) are cleaved as a signal peptide. The tract at residues 17-105 (ACGQDSDQQK…SNNQANNNQK (89 aa)) is disordered. Residue C18 is the site of N-palmitoyl cysteine attachment. The S-diacylglycerol cysteine moiety is linked to residue C18. Residues 23 to 70 (DQQKDSNKEKDDKAKTEQQDEKTNDSSKDKKDKKDDSKDVNKDNKDNS) are compositionally biased toward basic and acidic residues. The segment covering 71 to 105 (ANDNQQQSNSNATNNDQNQTNNNQSSNNQANNNQK) has biased composition (low complexity).

It is found in the cell membrane. This is an uncharacterized protein from Staphylococcus aureus (strain bovine RF122 / ET3-1).